The chain runs to 300 residues: Soluble inorganic pyrophosphatase 6, chloroplastic (300 aa).

The N-terminal 66 residues, 1–66 (MAATRVLTAA…CSAIYNPQVK (66 aa)), are a transit peptide targeting the chloroplast. Arg-140 contributes to the diphosphate binding site. Tyr-142 acts as the Proton donor in catalysis. The Mg(2+) site is built by Asp-173, Asp-178, and Asp-210.

It belongs to the PPase family. The cofactor is Mg(2+). Expressed in all tissues tested. Highest expression in flowers, leaves and roots. Lower levels of expression in siliques, stems, ovary, stigma and pollen.

The protein localises to the plastid. It is found in the chloroplast stroma. It catalyses the reaction diphosphate + H2O = 2 phosphate + H(+). With respect to regulation, inhibited by NaF. The sequence is that of Soluble inorganic pyrophosphatase 6, chloroplastic from Arabidopsis thaliana (Mouse-ear cress).